A 340-amino-acid chain; its full sequence is Galactoside alpha-(1,2)-fucosyltransferase 2 (340 aa).

Over 1–7 (MLSMQAS) the chain is Cytoplasmic. A helical; Signal-anchor for type II membrane protein transmembrane segment spans residues 8-28 (FFFPTGPFILFVFTASTIFHL). Residues 29–340 (QQRMVKIQPT…EADLSPLLKH (312 aa)) are Lumenal-facing. 4 N-linked (GlcNAc...) asparagine glycosylation sites follow: asparagine 185, asparagine 251, asparagine 279, and asparagine 305.

The protein localises to the golgi apparatus. The protein resides in the golgi stack membrane. It carries out the reaction a beta-D-galactosyl-(1-&gt;3)-N-acetyl-beta-D-glucosaminyl derivative + GDP-beta-L-fucose = an alpha-L-Fuc-(1-&gt;2)-beta-D-Gal-(1-&gt;3)-beta-D-GlcNAc derivative + GDP + H(+). The catalysed reaction is a beta-D-galactosyl-(1-&gt;4)-N-acetyl-beta-D-glucosaminyl derivative + GDP-beta-L-fucose = an alpha-L-Fuc-(1-&gt;2)-beta-D-Gal-(1-&gt;4)-beta-D-GlcNAc derivative + GDP + H(+). The enzyme catalyses a neolactoside nLc4Cer + GDP-beta-L-fucose = a neolactoside IV(2)-alpha-Fuc-nLc4Cer + GDP + H(+). It catalyses the reaction a neolactoside nLc4Cer(d18:1(4E)) + GDP-beta-L-fucose = a neolactoside IV(2)-alpha-Fuc-nLc4Cer(d18:1(4E)) + GDP + H(+). It carries out the reaction a ganglioside GM1 + GDP-beta-L-fucose = a ganglioside Fuc-GM1 + GDP + H(+). The catalysed reaction is a ganglioside GA1 + GDP-beta-L-fucose = a ganglioside Fuc-GA1 + GDP + H(+). The enzyme catalyses Lc4Cer + GDP-beta-L-fucose = alpha-L-fucosyl-(1-&gt;2)-beta-D-galactosyl-(1-&gt;3)-N-acetyl-beta-D-glucosaminyl-(1-&gt;3)-beta-D-galactosyl-(1-&gt;4)-beta-D-glucosyl-(1&lt;-&gt;1')-ceramide + GDP + H(+). It catalyses the reaction a beta-D-Gal-(1-&gt;3)-beta-D-GlcNAc-(1-&gt;3)-beta-D-Gal-(1-&gt;4)-beta-D-Glc-(1&lt;-&gt;1')-Cer(d18:1(4E)) + GDP-beta-L-fucose = alpha-L-fucosyl-(1-&gt;2)- beta-D-galactosyl-(1-&gt;3)-N-acetyl-beta-D-glucosaminyl-(1-&gt;3)-beta-D-galactosyl-(1-&gt;4)-beta-D-glucosyl-(1&lt;-&gt;1')-N-acylsphing-4-enine + GDP + H(+). It carries out the reaction a ganglioside GD1b + GDP-beta-L-fucose = a ganglioside Fuc-GD1b + GDP + H(+). The catalysed reaction is a ganglioside GM1 (d18:1(4E)) + GDP-beta-L-fucose = a ganglioside Fuc-GM1 (d18:1(4E)) + GDP + H(+). The enzyme catalyses a globoside GalGb4Cer (d18:1(4E)) + GDP-beta-L-fucose = a globoside Globo-H (d18:1(4E)) + GDP + H(+). It catalyses the reaction a lactoside III(4)-a-Fuc-Lc4Cer + GDP-beta-L-fucose = a lactoside IV(2),III(4)-a-[Fuc]2-Lc4Cer + GDP + H(+). It carries out the reaction beta-D-galactosyl-(1-&gt;3)-N-acetyl-D-galactosamine + GDP-beta-L-fucose = alpha-L-fucosyl-(1-&gt;2)-beta-D-galactosyl-(1-&gt;3)-N-acetyl-D-galactosamine + GDP + H(+). It functions in the pathway protein modification; protein glycosylation. In terms of biological role, catalyzes the transfer of L-fucose, from a guanosine diphosphate-beta-L-fucose, to the terminal galactose on both O- and N-linked glycans chains of cell surface glycoproteins and glycolipids and the resulting epitope regulates several processes such as cell-cell interaction including host-microbe interaction, cell surface expression and cell proliferation. Preferentially fucosylates gangliosides GA1 and GM1 in the antrum, cecum and colon and in the female reproductive organs. Fucosylated host glycoproteins or glycolipids mediate interaction with intestinal microbiota influencing its composition. Creates a soluble precursor oligosaccharide FuC-alpha ((1,2)Galbeta-) called the H antigen which is an essential substrate for the final step in the soluble ABO blood group antigen synthesis pathway. The sequence is that of Galactoside alpha-(1,2)-fucosyltransferase 2 from Sus scrofa (Pig).